We begin with the raw amino-acid sequence, 266 residues long: Coiled-coil domain-containing glutamate-rich protein 2 (266 aa).

An N-terminal signal peptide occupies residues 1–23 (MPPRGPASELLLLRLLLLGAATA). 4 stretches are compositionally biased toward basic and acidic residues: residues 90-100 (EAGKMRSSQEV), 154-188 (LWQR…EKGV), 204-213 (GGGERREDLP), and 221-266 (QPEA…RREG). Residues 90–266 (EAGKMRSSQE…TLGEQLRREG (177 aa)) form a disordered region.

Expressed at higher levels in fetal brain and skeletal muscle. Lower expression is detected in fetal kidney, liver, spleen, thymus, heart and lung.

It localises to the secreted. This chain is Coiled-coil domain-containing glutamate-rich protein 2 (CCER2), found in Homo sapiens (Human).